The chain runs to 232 residues: Large ribosomal subunit protein uL1 (232 aa).

The protein belongs to the universal ribosomal protein uL1 family. In terms of assembly, part of the 50S ribosomal subunit.

Binds directly to 23S rRNA. The L1 stalk is quite mobile in the ribosome, and is involved in E site tRNA release. Its function is as follows. Protein L1 is also a translational repressor protein, it controls the translation of the L11 operon by binding to its mRNA. The sequence is that of Large ribosomal subunit protein uL1 from Xanthomonas axonopodis pv. citri (strain 306).